We begin with the raw amino-acid sequence, 363 residues long: NAD(P)H-quinone oxidoreductase subunit 1, chloroplastic (363 aa).

The next 6 helical transmembrane spans lie at 30-50, 104-124, 127-147, 248-268, 300-320, and 343-363; these read LIPI…IVWL, IAVI…HLVL, LSIG…GLLM, YSGI…LVSS, VFGT…FLFI, and FLLP…LISL.

This sequence belongs to the complex I subunit 1 family. NDH is composed of at least 16 different subunits, 5 of which are encoded in the nucleus.

It localises to the plastid. The protein localises to the chloroplast thylakoid membrane. It carries out the reaction a plastoquinone + NADH + (n+1) H(+)(in) = a plastoquinol + NAD(+) + n H(+)(out). The catalysed reaction is a plastoquinone + NADPH + (n+1) H(+)(in) = a plastoquinol + NADP(+) + n H(+)(out). NDH shuttles electrons from NAD(P)H:plastoquinone, via FMN and iron-sulfur (Fe-S) centers, to quinones in the photosynthetic chain and possibly in a chloroplast respiratory chain. The immediate electron acceptor for the enzyme in this species is believed to be plastoquinone. Couples the redox reaction to proton translocation, and thus conserves the redox energy in a proton gradient. This chain is NAD(P)H-quinone oxidoreductase subunit 1, chloroplastic, found in Lactuca sativa (Garden lettuce).